The primary structure comprises 63 residues: Large ribosomal subunit protein uL30 (63 aa).

Belongs to the universal ribosomal protein uL30 family. Part of the 50S ribosomal subunit.

The sequence is that of Large ribosomal subunit protein uL30 from Coxiella burnetii (strain CbuK_Q154) (Coxiella burnetii (strain Q154)).